The following is a 358-amino-acid chain: Peptide chain release factor 1 (358 aa).

An N5-methylglutamine modification is found at glutamine 235.

It belongs to the prokaryotic/mitochondrial release factor family. Methylated by PrmC. Methylation increases the termination efficiency of RF1.

It localises to the cytoplasm. Its function is as follows. Peptide chain release factor 1 directs the termination of translation in response to the peptide chain termination codons UAG and UAA. The polypeptide is Peptide chain release factor 1 (Brachyspira hyodysenteriae (strain ATCC 49526 / WA1)).